The sequence spans 146 residues: VHWTAEEKQLITGLWGKVNVAECGAEALARLLIVYPWTQRFFASFGNLSSATAITGNPMVRAHGKKVLTSFGEAVKNLDNIKATFAQLSELHCDKLHVDPENFRLLGDILIIVLAAHFAKDFTPECQAAWQKLVGAVAHALARKYH.

Positions 2-146 constitute a Globin domain; sequence HWTAEEKQLI…VAHALARKYH (145 aa). Residues His63 and His92 each coordinate heme b.

This sequence belongs to the globin family. Heterotetramer of two alpha chains and two beta chains. In terms of tissue distribution, red blood cells.

Its function is as follows. Involved in oxygen transport from the lung to the various peripheral tissues. This chain is Hemoglobin subunit beta (HBB), found in Phalacrocorax carbo (Great cormorant).